A 386-amino-acid chain; its full sequence is Protein phosphatase methylesterase 1 (386 aa).

The disordered stretch occupies residues 1–38; the sequence is MSALEKSMHLGRLPSRPPLPGSGGSQSGAKMRMGPGRK. Ser15 is modified (phosphoserine). Asymmetric dimethylarginine; alternate is present on Arg16. Arg16 is modified (omega-N-methylarginine; alternate). At Ser42 the chain carries Phosphoserine. Catalysis depends on residues Ser156 and Asp181. Residues 254 to 265 show a composition bias toward acidic residues; the sequence is IIEEEEEDEEGS. The disordered stretch occupies residues 254-280; that stretch reads IIEEEEEDEEGSESISKRKKEDDMETK. The span at 268 to 280 shows a compositional bias: basic and acidic residues; sequence ISKRKKEDDMETK. Residue His349 is part of the active site.

Belongs to the AB hydrolase superfamily. Binds PPP2CA and PPP2CB. Post-translationally, phosphorylated by SIK1 following increases in intracellular sodium, leading to dissociation from the protein phosphatase 2A (PP2A) complex and subsequent dephosphorylation of sodium/potassium-transporting ATPase ATP1A1.

The catalysed reaction is [phosphatase 2A protein]-C-terminal L-leucine methyl ester + H2O = [phosphatase 2A protein]-C-terminal L-leucine + methanol + H(+). In terms of biological role, demethylates proteins that have been reversibly carboxymethylated. Demethylates PPP2CB (in vitro) and PPP2CA. Binding to PPP2CA displaces the manganese ion and inactivates the enzyme. This chain is Protein phosphatase methylesterase 1 (PPME1), found in Homo sapiens (Human).